The primary structure comprises 258 residues: Aspartate/glutamate leucyltransferase (258 aa).

Belongs to the R-transferase family. Bpt subfamily.

Its subcellular location is the cytoplasm. It catalyses the reaction N-terminal L-glutamyl-[protein] + L-leucyl-tRNA(Leu) = N-terminal L-leucyl-L-glutamyl-[protein] + tRNA(Leu) + H(+). It carries out the reaction N-terminal L-aspartyl-[protein] + L-leucyl-tRNA(Leu) = N-terminal L-leucyl-L-aspartyl-[protein] + tRNA(Leu) + H(+). In terms of biological role, functions in the N-end rule pathway of protein degradation where it conjugates Leu from its aminoacyl-tRNA to the N-termini of proteins containing an N-terminal aspartate or glutamate. In Bradyrhizobium sp. (strain BTAi1 / ATCC BAA-1182), this protein is Aspartate/glutamate leucyltransferase.